The sequence spans 491 residues: Cytosol aminopeptidase (491 aa).

The Mn(2+) site is built by Lys263 and Asp268. Residue Lys275 is part of the active site. Residues Asp286, Asp345, and Glu347 each coordinate Mn(2+). Arg349 is an active-site residue.

It belongs to the peptidase M17 family. Mn(2+) serves as cofactor.

Its subcellular location is the cytoplasm. It catalyses the reaction Release of an N-terminal amino acid, Xaa-|-Yaa-, in which Xaa is preferably Leu, but may be other amino acids including Pro although not Arg or Lys, and Yaa may be Pro. Amino acid amides and methyl esters are also readily hydrolyzed, but rates on arylamides are exceedingly low.. The enzyme catalyses Release of an N-terminal amino acid, preferentially leucine, but not glutamic or aspartic acids.. Presumably involved in the processing and regular turnover of intracellular proteins. Catalyzes the removal of unsubstituted N-terminal amino acids from various peptides. This chain is Cytosol aminopeptidase (pepA), found in Haemophilus influenzae (strain ATCC 51907 / DSM 11121 / KW20 / Rd).